The chain runs to 79 residues: Serine protease inhibitor Kazal-type 1-like (79 aa).

Positions 1–23 are cleaved as a signal peptide; it reads MKVAIIFLLSALALLNLAGNTTA. Residues 26 to 79 form the Kazal-like domain; that stretch reads IGKKANCPNTLVGCPRDYDPVCGTDGKTYANECILCFENRKFGTSIRIQRRGLC. Cystine bridges form between Cys32–Cys61, Cys39–Cys58, and Cys47–Cys79.

As to expression, seminal vesicle.

Its subcellular location is the secreted. Serine protease inhibitor which exhibits anti-trypsin activity. In the pancreas, protects against trypsin-catalyzed premature activation of zymogens. Its function is as follows. In the male reproductive tract, binds to sperm heads where it modulates sperm capacitance by inhibiting calcium uptake and nitrogen oxide (NO) production. The protein is Serine protease inhibitor Kazal-type 1-like of Rattus norvegicus (Rat).